Here is a 794-residue protein sequence, read N- to C-terminus: Furin (794 aa).

Positions 1–26 (MELRPWLLWVVAATGTLVLLAADAQG) are cleaved as a signal peptide. Positions 27 to 107 (QKVFTNTWAV…QQVAKRRTKR (81 aa)) are cleaved as a propeptide — inhibition peptide. Residues 108–715 (DVYQEPTDPK…AGLLPSHLPE (608 aa)) lie on the Lumenal side of the membrane. D115 contacts Ca(2+). Residues 121 to 435 (QWYLSGVTQR…YGLLDAGAMV (315 aa)) enclose the Peptidase S8 domain. The Charge relay system role is filled by D153. D154 contacts substrate. D162, D174, D179, and D181 together coordinate Ca(2+). A disordered region spans residues 162-183 (DLAGNYDPGASFDVNDQDPDPQ). 191–192 (DN) serves as a coordination point for substrate. H194 (charge relay system) is an active-site residue. 4 residues coordinate Ca(2+): V205, N208, V210, and G212. Cystine bridges form between C211-C360 and C303-C333. Residues E236, 253–258 (SWGPED), D264, and 292–295 (ASGN) contribute to the substrate site. D258 serves as a coordination point for Ca(2+). D301 lines the Ca(2+) pocket. D306 and Y308 together coordinate substrate. A Ca(2+)-binding site is contributed by E331. The active-site Charge relay system is the S368. S368 provides a ligand contact to substrate. N387 and N440 each carry an N-linked (GlcNAc...) asparagine glycan. The P/Homo B domain maps to 444-576 (VAPQRKCIID…TLVLYGTAPE (133 aa)). Residues C450 and C474 are joined by a disulfide bond. Positions 498 to 500 (RGD) match the Cell attachment site motif. The N-linked (GlcNAc...) asparagine glycan is linked to N553. 2 FU repeats span residues 577-620 (GLPV…GFAP) and 638-681 (ASVC…QSQS). The tract at residues 673–696 (QTCSRQSQSSRESPPQQQPPRLPP) is disordered. Low complexity predominate over residues 676–687 (SRQSQSSRESPP). A helical transmembrane segment spans residues 716-738 (VVAGLSCAFIVLVFVTVFLVLQL). Residues 739–794 (RSGFSFRGVKVYTMDRGLISYKGLPPEAWQEECPSDSEEDEGRGERTAFIKDQSAL) are Cytoplasmic-facing. Positions 759–762 (YKGL) are cell surface signal. Positions 767 to 780 (WQEECPSDSEEDEG) are enriched in acidic residues. The disordered stretch occupies residues 767–794 (WQEECPSDSEEDEGRGERTAFIKDQSAL). S773 and S775 each carry phosphoserine; by CK2. The Trans Golgi network signal signature appears at 773–779 (SDSEEDE).

This sequence belongs to the peptidase S8 family. Furin subfamily. Interacts with FLNA. Binds to PACS1 which mediates TGN localization and connection to clathrin adapters. Interacts with LAMP1, LAMP2 and LAMP3. It depends on Ca(2+) as a cofactor. Post-translationally, the inhibition peptide, which plays the role of an intramolecular chaperone, is autocatalytically removed in the endoplasmic reticulum (ER) and remains non-covalently bound to furin as a potent autoinhibitor. Following transport to the trans Golgi, a second cleavage within the inhibition propeptide results in propeptide dissociation and furin activation. Phosphorylation is required for TGN localization of the endoprotease. In vivo, exists as di-, mono- and non-phosphorylated forms. Seems to be expressed ubiquitously.

Its subcellular location is the golgi apparatus. The protein resides in the trans-Golgi network membrane. It localises to the cell membrane. The protein localises to the secreted. It is found in the endosome membrane. The enzyme catalyses Release of mature proteins from their proproteins by cleavage of -Arg-Xaa-Yaa-Arg-|-Zaa- bonds, where Xaa can be any amino acid and Yaa is Arg or Lys. Releases albumin, complement component C3 and von Willebrand factor from their respective precursors.. Its activity is regulated as follows. Inhibited by the not secondly cleaved propeptide. Inhibited by m-guanidinomethyl-phenylacetyl-Arg-Val-Arg-(amidomethyl)-benzamidine (m-guanidinomethyl-Phac-RVR-Amb) and 4-guanidinomethyl-phenylacetyl-Arg-Tle-Arg-4-amidinobenzylamide (MI-1148). Inhibited by Decanoyl-Arg-Val-Lys-Arg-chloromethylketone (decanoyl-RVKR-CMK). Inhibited by heparin/heparan sulfate-binding. Functionally, ubiquitous endoprotease within constitutive secretory pathways capable of cleavage at the RX(K/R)R consensus motif. Mediates processing of TGFB1, an essential step in TGF-beta-1 activation. Converts through proteolytic cleavage the non-functional Brain natriuretic factor prohormone into its active hormone BNP(1-32). By mediating processing of accessory subunit ATP6AP1/Ac45 of the V-ATPase, regulates the acidification of dense-core secretory granules in islets of Langerhans cells. Its function is as follows. (Microbial infection) Cleaves and activates diphtheria toxin DT. (Microbial infection) Cleaves and activates anthrax toxin protective antigen (PA). In terms of biological role, (Microbial infection) Cleaves and activates HIV-1 virus Envelope glycoprotein gp160. Functionally, (Microbial infection) Required for H7N1 and H5N1 influenza virus infection probably by cleaving hemagglutinin. Its function is as follows. (Microbial infection) Able to cleave S.pneumoniae serine-rich repeat protein PsrP. (Microbial infection) Facilitates human coronaviruses EMC and SARS-CoV-2 infections by proteolytically cleaving the spike protein at the monobasic S1/S2 cleavage site. This cleavage is essential for spike protein-mediated cell-cell fusion and entry into human lung cells. In terms of biological role, (Microbial infection) Facilitates mumps virus infection by proteolytically cleaving the viral fusion protein F. The sequence is that of Furin from Homo sapiens (Human).